The sequence spans 208 residues: Uracil phosphoribosyltransferase (208 aa).

Residues R78, R103, and 130–138 each bind 5-phospho-alpha-D-ribose 1-diphosphate; that span reads DPMLATGGS. Uracil contacts are provided by residues I193 and 198–200; that span reads GDA. Position 199 (D199) interacts with 5-phospho-alpha-D-ribose 1-diphosphate.

Belongs to the UPRTase family. The cofactor is Mg(2+).

The catalysed reaction is UMP + diphosphate = 5-phospho-alpha-D-ribose 1-diphosphate + uracil. The protein operates within pyrimidine metabolism; UMP biosynthesis via salvage pathway; UMP from uracil: step 1/1. Its activity is regulated as follows. Allosterically activated by GTP. Catalyzes the conversion of uracil and 5-phospho-alpha-D-ribose 1-diphosphate (PRPP) to UMP and diphosphate. This Shewanella sediminis (strain HAW-EB3) protein is Uracil phosphoribosyltransferase.